The sequence spans 215 residues: S-crystallin 3 (215 aa).

The GST N-terminal domain occupies 2-80 (PSYTLHYFNH…YLAREFGYHG (79 aa)). Residues 82–215 (SNMEMARVDF…YLKKRCRTDF (134 aa)) form the GST C-terminal domain.

Belongs to the GST superfamily. In terms of tissue distribution, lens.

In terms of biological role, S-crystallins are structural components of squids and octopi eye lens. Contains relatively little if any GST activity. The sequence is that of S-crystallin 3 from Enteroctopus dofleini (North Pacific giant octopus).